A 902-amino-acid chain; its full sequence is 3'-5' exonuclease DinG (902 aa).

One can recognise an Exonuclease domain in the interval 8–161 (VVDLETTGNQ…DEDATTTAKL (154 aa)). Residues 241–496 (KNVTQSLNLT…KAVDKLEQQR (256 aa)) enclose the Helicase ATP-binding domain. Position 276 to 283 (276 to 283 (APLGSGKS)) interacts with ATP. Positions 448–451 (DEAH) match the DEAH box motif. The region spanning 714 to 883 (YIVEYITVTQ…HFKQRKGNIK (170 aa)) is the Helicase C-terminal domain.

The protein belongs to the helicase family. DinG subfamily. Type 2 sub-subfamily.

In terms of biological role, 3'-5' exonuclease. This Staphylococcus epidermidis (strain ATCC 35984 / DSM 28319 / BCRC 17069 / CCUG 31568 / BM 3577 / RP62A) protein is 3'-5' exonuclease DinG.